Consider the following 306-residue polypeptide: Pantothenate kinase (306 aa).

Position 91-98 (91-98) interacts with ATP; the sequence is GSVAVGKS.

This sequence belongs to the prokaryotic pantothenate kinase family.

It is found in the cytoplasm. The catalysed reaction is (R)-pantothenate + ATP = (R)-4'-phosphopantothenate + ADP + H(+). It participates in cofactor biosynthesis; coenzyme A biosynthesis; CoA from (R)-pantothenate: step 1/5. The protein is Pantothenate kinase (coaA) of Streptococcus pneumoniae serotype 4 (strain ATCC BAA-334 / TIGR4).